The sequence spans 223 residues: Deoxyribose-phosphate aldolase (223 aa).

D89 serves as the catalytic Proton donor/acceptor. K154 serves as the catalytic Schiff-base intermediate with acetaldehyde. Residue K183 is the Proton donor/acceptor of the active site.

The protein belongs to the DeoC/FbaB aldolase family. DeoC type 1 subfamily.

Its subcellular location is the cytoplasm. The enzyme catalyses 2-deoxy-D-ribose 5-phosphate = D-glyceraldehyde 3-phosphate + acetaldehyde. The protein operates within carbohydrate degradation; 2-deoxy-D-ribose 1-phosphate degradation; D-glyceraldehyde 3-phosphate and acetaldehyde from 2-deoxy-alpha-D-ribose 1-phosphate: step 2/2. In terms of biological role, catalyzes a reversible aldol reaction between acetaldehyde and D-glyceraldehyde 3-phosphate to generate 2-deoxy-D-ribose 5-phosphate. The polypeptide is Deoxyribose-phosphate aldolase (Thermoanaerobacter pseudethanolicus (strain ATCC 33223 / 39E) (Clostridium thermohydrosulfuricum)).